A 111-amino-acid chain; its full sequence is UPF0122 protein LACR_1522 (111 aa).

This sequence belongs to the UPF0122 family.

Functionally, might take part in the signal recognition particle (SRP) pathway. This is inferred from the conservation of its genetic proximity to ftsY/ffh. May be a regulatory protein. This Lactococcus lactis subsp. cremoris (strain SK11) protein is UPF0122 protein LACR_1522.